The following is a 309-amino-acid chain: Tagatose-6-phosphate kinase (309 aa).

It belongs to the carbohydrate kinase PfkB family. LacC subfamily.

It catalyses the reaction D-tagatofuranose 6-phosphate + ATP = D-tagatofuranose 1,6-bisphosphate + ADP + H(+). The protein operates within carbohydrate metabolism; D-tagatose 6-phosphate degradation; D-glyceraldehyde 3-phosphate and glycerone phosphate from D-tagatose 6-phosphate: step 1/2. The protein is Tagatose-6-phosphate kinase of Streptococcus pyogenes serotype M1.